Here is a 172-residue protein sequence, read N- to C-terminus: 6,7-dimethyl-8-ribityllumazine synthase (172 aa).

5-amino-6-(D-ribitylamino)uracil contacts are provided by residues F24, 58-60 (ALE), and 82-84 (AVI). 87–88 (ET) is a binding site for (2S)-2-hydroxy-3-oxobutyl phosphate. The active-site Proton donor is H90. Position 115 (N115) interacts with 5-amino-6-(D-ribitylamino)uracil. Residue R129 coordinates (2S)-2-hydroxy-3-oxobutyl phosphate. Residues 150 to 172 (ALEQLDGDEDDEGEGEDDEEERA) are disordered. Residues 154-172 (LDGDEDDEGEGEDDEEERA) are compositionally biased toward acidic residues.

This sequence belongs to the DMRL synthase family.

It catalyses the reaction (2S)-2-hydroxy-3-oxobutyl phosphate + 5-amino-6-(D-ribitylamino)uracil = 6,7-dimethyl-8-(1-D-ribityl)lumazine + phosphate + 2 H2O + H(+). Its pathway is cofactor biosynthesis; riboflavin biosynthesis; riboflavin from 2-hydroxy-3-oxobutyl phosphate and 5-amino-6-(D-ribitylamino)uracil: step 1/2. In terms of biological role, catalyzes the formation of 6,7-dimethyl-8-ribityllumazine by condensation of 5-amino-6-(D-ribitylamino)uracil with 3,4-dihydroxy-2-butanone 4-phosphate. This is the penultimate step in the biosynthesis of riboflavin. The polypeptide is 6,7-dimethyl-8-ribityllumazine synthase (Paraburkholderia phymatum (strain DSM 17167 / CIP 108236 / LMG 21445 / STM815) (Burkholderia phymatum)).